The following is a 79-amino-acid chain: Small ribosomal subunit protein bS18c (79 aa).

The protein belongs to the bacterial ribosomal protein bS18 family. In terms of assembly, part of the 30S ribosomal subunit.

Its subcellular location is the plastid. It is found in the chloroplast. This is Small ribosomal subunit protein bS18c from Physcomitrium patens (Spreading-leaved earth moss).